A 159-amino-acid polypeptide reads, in one-letter code: HSP70 co-chaperone SNL1 (159 aa).

At 1 to 12 (MSHNAMEHWKSK) the chain is on the perinuclear space side. The helical; Signal-anchor for type II membrane protein transmembrane segment at 13–35 (LSKTSTSTYVLLAVIAVVFLVTI) threads the bilayer. Residues 36-159 (RRPNGSKGKS…AMLKSLDSLK (124 aa)) are Cytoplasmic-facing. A disordered region spans residues 39 to 64 (NGSKGKSSKKRASKKNKKGKNQFEKA). The span at 44-58 (KSSKKRASKKNKKGK) shows a compositional bias: basic residues. Positions 73-159 (QIDNVSLRYG…AMLKSLDSLK (87 aa)) constitute a BAG domain.

As to quaternary structure, interacts with the HSP70 family members SSA1, SSA4, and SSB1. These interactions are strongly reduced by ADP and ATP.

It localises to the endoplasmic reticulum membrane. Its subcellular location is the nucleus membrane. Its function is as follows. Stimulator of ATPase activity of molecular chaperones of the HSP70 family (principally of the SSA class). Stimulation is important for HSP70-substrate complex dissociation after folding of newly synthesized or refolded proteins. SNL1 is probably involved in nuclear pore biogenesis and in particular the folding or refolding of misfolded NUP116, GLE2 and NIC96. This Saccharomyces cerevisiae (strain ATCC 204508 / S288c) (Baker's yeast) protein is HSP70 co-chaperone SNL1 (SNL1).